Reading from the N-terminus, the 326-residue chain is N-acetyl-gamma-glutamyl-phosphate reductase (326 aa).

Cys155 is an active-site residue.

It belongs to the NAGSA dehydrogenase family. Type 1 subfamily.

Its subcellular location is the cytoplasm. The enzyme catalyses N-acetyl-L-glutamate 5-semialdehyde + phosphate + NADP(+) = N-acetyl-L-glutamyl 5-phosphate + NADPH + H(+). It functions in the pathway amino-acid biosynthesis; L-arginine biosynthesis; N(2)-acetyl-L-ornithine from L-glutamate: step 3/4. Functionally, catalyzes the NADPH-dependent reduction of N-acetyl-5-glutamyl phosphate to yield N-acetyl-L-glutamate 5-semialdehyde. The sequence is that of N-acetyl-gamma-glutamyl-phosphate reductase from Shewanella baltica (strain OS223).